A 344-amino-acid chain; its full sequence is Uroporphyrinogen decarboxylase (344 aa).

Substrate is bound by residues 26 to 30 (RQAGR), Phe45, Asp75, Tyr151, Ser206, and His320.

This sequence belongs to the uroporphyrinogen decarboxylase family. Homodimer.

It is found in the cytoplasm. The enzyme catalyses uroporphyrinogen III + 4 H(+) = coproporphyrinogen III + 4 CO2. It functions in the pathway porphyrin-containing compound metabolism; protoporphyrin-IX biosynthesis; coproporphyrinogen-III from 5-aminolevulinate: step 4/4. Its function is as follows. Catalyzes the decarboxylation of four acetate groups of uroporphyrinogen-III to yield coproporphyrinogen-III. In Staphylococcus epidermidis (strain ATCC 35984 / DSM 28319 / BCRC 17069 / CCUG 31568 / BM 3577 / RP62A), this protein is Uroporphyrinogen decarboxylase.